A 137-amino-acid polypeptide reads, in one-letter code: Large-conductance mechanosensitive channel (137 aa).

3 consecutive transmembrane segments (helical) span residues isoleucine 15–valine 35, isoleucine 38–glutamine 58, and glycine 80–valine 100.

This sequence belongs to the MscL family. As to quaternary structure, homopentamer.

It is found in the cell inner membrane. Its function is as follows. Channel that opens in response to stretch forces in the membrane lipid bilayer. May participate in the regulation of osmotic pressure changes within the cell. This chain is Large-conductance mechanosensitive channel, found in Bartonella quintana (strain Toulouse) (Rochalimaea quintana).